The primary structure comprises 32 residues: Natriuretic peptide Coa_NP1 (32 aa).

Cysteine 8 and cysteine 24 are joined by a disulfide.

Belongs to the natriuretic peptide family. Snake NP subfamily. As to expression, expressed by the venom gland.

The protein resides in the secreted. Snake venom natriuretic peptide that exhibits hypotensive and vasodepressor activity in rats. This is Natriuretic peptide Coa_NP1 from Crotalus lutosus abyssus (Grand Canyon rattlesnake).